The chain runs to 163 residues: Phosphopantetheine adenylyltransferase (163 aa).

T10 is a binding site for substrate. ATP-binding positions include 10-11 (TF) and H18. 3 residues coordinate substrate: K42, L74, and R88. ATP is bound by residues 89 to 91 (GLR), E99, and 124 to 130 (NSFISST).

It belongs to the bacterial CoaD family. Homohexamer. Mg(2+) serves as cofactor.

It is found in the cytoplasm. It carries out the reaction (R)-4'-phosphopantetheine + ATP + H(+) = 3'-dephospho-CoA + diphosphate. The protein operates within cofactor biosynthesis; coenzyme A biosynthesis; CoA from (R)-pantothenate: step 4/5. In terms of biological role, reversibly transfers an adenylyl group from ATP to 4'-phosphopantetheine, yielding dephospho-CoA (dPCoA) and pyrophosphate. This chain is Phosphopantetheine adenylyltransferase, found in Shewanella baltica (strain OS223).